The primary structure comprises 242 residues: Caffeoyl-CoA O-methyltransferase 2 (242 aa).

Lysine 16 lines the substrate pocket. S-adenosyl-L-methionine is bound by residues threonine 58, glutamate 80, 82 to 83 (GV), serine 88, aspartate 106, and alanine 135. Aspartate 158 is a substrate binding site. Position 158 (aspartate 158) interacts with a divalent metal cation. Residue aspartate 160 coordinates S-adenosyl-L-methionine. Residues aspartate 184 and asparagine 185 each contribute to the a divalent metal cation site. A substrate-binding site is contributed by asparagine 189.

The protein belongs to the class I-like SAM-binding methyltransferase superfamily. Cation-dependent O-methyltransferase family. CCoAMT subfamily. Mg(2+) is required as a cofactor. Mostly expressed in the bottom and middle parts of the stems.

It carries out the reaction (E)-caffeoyl-CoA + S-adenosyl-L-methionine = (E)-feruloyl-CoA + S-adenosyl-L-homocysteine + H(+). It participates in aromatic compound metabolism; phenylpropanoid biosynthesis. Methylates caffeoyl-CoA to feruloyl-CoA and 5-hydroxyferuloyl-CoA to sinapoyl-CoA. Plays a role in the synthesis of feruloylated polysaccharides. Involved in the reinforcement of the plant cell wall. Also involved in the responding to wounding or pathogen challenge by the increased formation of cell wall-bound ferulic acid polymers. Methylates 5-hydroxyferulolyl-CoA more efficiently than caffeoyl-CoA. In Nicotiana tabacum (Common tobacco), this protein is Caffeoyl-CoA O-methyltransferase 2 (CCOAOMT2).